We begin with the raw amino-acid sequence, 908 residues long: Protein translocase subunit SecA (908 aa).

Residues Q90, 108–112 (GEGKT), and D503 contribute to the ATP site. The span at 846–864 (AAAAEAPVAPAPQPAAAAP) shows a compositional bias: low complexity. Residues 846–884 (AAAAEAPVAPAPQPAAAAPQPTPELVGAEAGEPDPAAWG) are disordered. Residues C892, C894, C903, and H904 each contribute to the Zn(2+) site.

It belongs to the SecA family. In terms of assembly, monomer and homodimer. Part of the essential Sec protein translocation apparatus which comprises SecA, SecYEG and auxiliary proteins SecDF-YajC and YidC. The cofactor is Zn(2+).

The protein resides in the cell inner membrane. Its subcellular location is the cytoplasm. It catalyses the reaction ATP + H2O + cellular proteinSide 1 = ADP + phosphate + cellular proteinSide 2.. Part of the Sec protein translocase complex. Interacts with the SecYEG preprotein conducting channel. Has a central role in coupling the hydrolysis of ATP to the transfer of proteins into and across the cell membrane, serving both as a receptor for the preprotein-SecB complex and as an ATP-driven molecular motor driving the stepwise translocation of polypeptide chains across the membrane. The chain is Protein translocase subunit SecA from Cereibacter sphaeroides (strain KD131 / KCTC 12085) (Rhodobacter sphaeroides).